Reading from the N-terminus, the 38-residue chain is Photosystem II reaction center protein L (38 aa).

A helical membrane pass occupies residues 17–37 (SLYWGLLLIFVLAILFSNYIF).

This sequence belongs to the PsbL family. PSII is composed of 1 copy each of membrane proteins PsbA, PsbB, PsbC, PsbD, PsbE, PsbF, PsbH, PsbI, PsbJ, PsbK, PsbL, PsbM, PsbT, PsbX, PsbY, PsbZ, Psb30/Ycf12, at least 3 peripheral proteins of the oxygen-evolving complex and a large number of cofactors. It forms dimeric complexes.

It localises to the plastid. The protein localises to the chloroplast thylakoid membrane. In terms of biological role, one of the components of the core complex of photosystem II (PSII). PSII is a light-driven water:plastoquinone oxidoreductase that uses light energy to abstract electrons from H(2)O, generating O(2) and a proton gradient subsequently used for ATP formation. It consists of a core antenna complex that captures photons, and an electron transfer chain that converts photonic excitation into a charge separation. This subunit is found at the monomer-monomer interface and is required for correct PSII assembly and/or dimerization. The chain is Photosystem II reaction center protein L from Chlorokybus atmophyticus (Soil alga).